The primary structure comprises 541 residues: Zinc finger protein 655 (541 aa).

Positions 1–22 (MEEVTSQEAAESPRGHFQPLEN) are disordered. C2H2-type zinc fingers lie at residues 243–265 (YKCD…QRIH), 271–293 (YKCK…KRIH), 334–356 (YKCG…QRTH), 361–383 (CKCT…QRLH), 411–433 (YSCN…QRIH), and 439–461 (HECN…HKMH). Residues 495-517 (FDCDAWEENFSQRAHLIQHERVH) form a C2H2-type 7; degenerate zinc finger.

This sequence belongs to the krueppel C2H2-type zinc-finger protein family. In terms of assembly, interacts with VAV1 and CDK4. Interacts with INTS13; promoting association with the integrator complex.

Its subcellular location is the nucleus. Functionally, probable transcription factor. In Mus musculus (Mouse), this protein is Zinc finger protein 655 (Znf655).